The following is a 495-amino-acid chain: MPKKLVPKDYEYIHLDLTTGEINFTSFNSLEELQASLKEGQIFFHKSVIFEEKPESGEIYSPKLISQIYRKEQELFEIREKSKGHPLPVTKKLLKRGQGTIVCCGIYTKELLKNVAEKGQYDTQCDDLNLGIFHVRAHKPLGIAQRLVHLPLPEDASSAAVATENLFGLIRFILVNDPAKKKIYLPISCFAIEKRIEQEHIIGYSQKDSLALSQRAYYEYKKDGTLIGLVALIGVDVKIDGKLGFLYHPVWREKQWALKFNEKMFYCAVSRAEKEKVFKPPYYLEPTAIIVDVTETPVKRLKNTSEDYLWLEVSQISAKFSLFCAQNNLKLEKADSKNKSPFVALSMESISELTGEQKRAFVKILNIPGIIFSSSTLAKARLESKLQYIGPALIEAAADGNFTDVVDIINRIEPLYDYKEILKEALKTQRLGTGNTPLQEAIKGQHTSLVKYFSSLSASLKVINHKNHQGLTALNFATAIGSSPAIVQELEWCSQ.

A helical membrane pass occupies residues 224–235 (GTLIGLVALIGV).

It localises to the cell membrane. This Coxiella burnetii protein is Surface E' protein (cbbE').